The chain runs to 286 residues: Pyridoxal kinase PdxY (286 aa).

Substrate is bound by residues S9 and 44 to 45 (TQ). D111, E148, and K181 together coordinate ATP. Residue D222 coordinates substrate.

This sequence belongs to the pyridoxine kinase family. PdxY subfamily. Homodimer. Mg(2+) is required as a cofactor.

It catalyses the reaction pyridoxal + ATP = pyridoxal 5'-phosphate + ADP + H(+). It participates in cofactor metabolism; pyridoxal 5'-phosphate salvage; pyridoxal 5'-phosphate from pyridoxal: step 1/1. Functionally, pyridoxal kinase involved in the salvage pathway of pyridoxal 5'-phosphate (PLP). Catalyzes the phosphorylation of pyridoxal to PLP. The sequence is that of Pyridoxal kinase PdxY from Histophilus somni (strain 129Pt) (Haemophilus somnus).